A 174-amino-acid polypeptide reads, in one-letter code: MTRKSRRLILIGAGLGVLALAAGLILTALNDTIVFFRTPTEVAQQQIAPGARLRLGGLVEPGSVAKSGASVRFAVTDGNSKVTVAYTGLLPDLFREGQGVVAEGVLQSDGTVKADSVLAKHDERYMPREVADALKKSGHWKEGEEGGPVPPAAKTPGPQSSAAPPAVSPARSTP.

The Cytoplasmic portion of the chain corresponds to 1-7; the sequence is MTRKSRR. Residues 8 to 28 traverse the membrane as a helical; Signal-anchor for type II membrane protein segment; it reads LILIGAGLGVLALAAGLILTA. Over 29 to 174 the chain is Periplasmic; that stretch reads LNDTIVFFRT…PAVSPARSTP (146 aa). The heme site is built by histidine 121 and tyrosine 125. The span at 130 to 144 shows a compositional bias: basic and acidic residues; that stretch reads VADALKKSGHWKEGE. Residues 130–174 form a disordered region; sequence VADALKKSGHWKEGEEGGPVPPAAKTPGPQSSAAPPAVSPARSTP. The segment covering 156–174 has biased composition (low complexity); sequence PGPQSSAAPPAVSPARSTP.

This sequence belongs to the CcmE/CycJ family.

Its subcellular location is the cell inner membrane. In terms of biological role, heme chaperone required for the biogenesis of c-type cytochromes. Transiently binds heme delivered by CcmC and transfers the heme to apo-cytochromes in a process facilitated by CcmF and CcmH. The polypeptide is Cytochrome c-type biogenesis protein CcmE (Azorhizobium caulinodans (strain ATCC 43989 / DSM 5975 / JCM 20966 / LMG 6465 / NBRC 14845 / NCIMB 13405 / ORS 571)).